The sequence spans 156 residues: 6,7-dimethyl-8-ribityllumazine synthase (156 aa).

Residues Phe22, 57–59 (AYE), and 81–83 (SVI) contribute to the 5-amino-6-(D-ribitylamino)uracil site. Residue 86–87 (GT) coordinates (2S)-2-hydroxy-3-oxobutyl phosphate. His89 (proton donor) is an active-site residue. Phe114 provides a ligand contact to 5-amino-6-(D-ribitylamino)uracil. A (2S)-2-hydroxy-3-oxobutyl phosphate-binding site is contributed by Arg128.

Belongs to the DMRL synthase family. In terms of assembly, forms an icosahedral capsid composed of 60 subunits, arranged as a dodecamer of pentamers.

It catalyses the reaction (2S)-2-hydroxy-3-oxobutyl phosphate + 5-amino-6-(D-ribitylamino)uracil = 6,7-dimethyl-8-(1-D-ribityl)lumazine + phosphate + 2 H2O + H(+). It participates in cofactor biosynthesis; riboflavin biosynthesis; riboflavin from 2-hydroxy-3-oxobutyl phosphate and 5-amino-6-(D-ribitylamino)uracil: step 1/2. Its function is as follows. Catalyzes the formation of 6,7-dimethyl-8-ribityllumazine by condensation of 5-amino-6-(D-ribitylamino)uracil with 3,4-dihydroxy-2-butanone 4-phosphate. This is the penultimate step in the biosynthesis of riboflavin. This is 6,7-dimethyl-8-ribityllumazine synthase from Photobacterium leiognathi.